The chain runs to 1073 residues: MPKREDIKKVLLIGSGPITIGQAAEFDFSGSQACRSLKEEGVQVVLVNSNPATIMTDPEMADSVYIEPLDARIIEKIIEKERPDGIIAGIGGQTGLNITSELAEMGVFEKYGVQILGTPVEAIKNTEDRELFKETMLSIGEKVPLSRAVHSLKEAEEVVEELGLPLIIRPAYTLGGAGGGIARTKEELLEITERGLRRSRINQVLIEESVLGWAEVEYEVMRDANDTCIVICNMENIDPMGVHTGESAVVAPSQTLSDEEHQMLRSASIKIIRALKIEGGCNIQYALKEGDYRIVEVNPRVSRSSALASKATGYPIARVTAKIAIGMTLDEIVNSVTKSTPASFEPALDYVITKIPRWPFDKFTTADKTLTTAMKSTGEIMAIGRTIEESLLKAFKSLDIDNQLGIKRWDEPEIKTLLKTPTSERLFVIFHALERGMSIKEIAELTSINPFFISKMKKIVEMEKCIRTEELTPEFLREVKRMGFPDSRLAELTGKTREQISDFRHEEGILATFKMVDTCAAEFEAATPYYYSTYEDTCETNSTDKKKILILGAGPIRIGQGIEFDYCTVHAVTALREEGIETHIINNNPETVSTDFDTSDKLFFEPLTMEYVMNVIERERPDGVLVQFGGQTSVNLALPLKKELKRRTDLNTVILGTDPEDMDLAEDREKFYLLMQELGIPQPEGGYATSQQEAIEVAKRIGFPVLVRPSYVLGGRAMEIVYDEIDLERYMKEAVRVSPEHPILIDDFLEAACEIDVDAVCDQIDVLIGAIMEHIEEAGVHSGDSACVIPPQSLSKEVLDQVRDYTRKIALGLRVKGLINIQMAEKGGKVFVLEANPRSSRTIPFVSKAVGIPLAKIAAKVIAGHSLKDLGYTDEPKPKHVSIKEVLLPFDKLPGADPVLGPEMKSTGEVMGVDYDFGRAYYKAELAADNLLPLTGKVFLSIRNADKPELVEAARKLQAAGLELMGTRGTVNYLAQHGIFMDTVKKVHDGSPNVIDMMRRDEVDLIINTPTSKMSRKDGYRIRRAAVDFKVPYITTIQAAVAAADAIETMKKGQDLTIKSINEYHKEMEQKEE.

Positions 1 to 399 are carboxyphosphate synthetic domain; the sequence is MPKREDIKKV…SLLKAFKSLD (399 aa). Positions 129, 169, 175, 176, 208, 210, 215, 241, 242, 243, 284, and 296 each coordinate ATP. The ATP-grasp 1 domain maps to 133–325; that stretch reads KETMLSIGEK…IARVTAKIAI (193 aa). 3 residues coordinate Mg(2+): glutamine 284, glutamate 296, and asparagine 298. Mn(2+) contacts are provided by glutamine 284, glutamate 296, and asparagine 298. The oligomerization domain stretch occupies residues 400–540; the sequence is IDNQLGIKRW…YSTYEDTCET (141 aa). The segment at 541–931 is carbamoyl phosphate synthetic domain; the sequence is NSTDKKKILI…YKAELAADNL (391 aa). In terms of domain architecture, ATP-grasp 2 spans 672–863; that stretch reads YLLMQELGIP…LAKIAAKVIA (192 aa). Positions 708, 747, 749, 754, 779, 780, 781, 782, 822, and 834 each coordinate ATP. Mg(2+)-binding residues include glutamine 822, glutamate 834, and asparagine 836. 3 residues coordinate Mn(2+): glutamine 822, glutamate 834, and asparagine 836. In terms of domain architecture, MGS-like spans 930–1071; sequence NLLPLTGKVF…NEYHKEMEQK (142 aa). The segment at 932–1073 is allosteric domain; that stretch reads LPLTGKVFLS…YHKEMEQKEE (142 aa).

It belongs to the CarB family. As to quaternary structure, composed of two chains; the small (or glutamine) chain promotes the hydrolysis of glutamine to ammonia, which is used by the large (or ammonia) chain to synthesize carbamoyl phosphate. Tetramer of heterodimers (alpha,beta)4. Mg(2+) serves as cofactor. It depends on Mn(2+) as a cofactor.

It catalyses the reaction hydrogencarbonate + L-glutamine + 2 ATP + H2O = carbamoyl phosphate + L-glutamate + 2 ADP + phosphate + 2 H(+). The catalysed reaction is hydrogencarbonate + NH4(+) + 2 ATP = carbamoyl phosphate + 2 ADP + phosphate + 2 H(+). Its pathway is amino-acid biosynthesis; L-arginine biosynthesis; carbamoyl phosphate from bicarbonate: step 1/1. It functions in the pathway pyrimidine metabolism; UMP biosynthesis via de novo pathway; (S)-dihydroorotate from bicarbonate: step 1/3. Its function is as follows. Large subunit of the glutamine-dependent carbamoyl phosphate synthetase (CPSase). CPSase catalyzes the formation of carbamoyl phosphate from the ammonia moiety of glutamine, carbonate, and phosphate donated by ATP, constituting the first step of 2 biosynthetic pathways, one leading to arginine and/or urea and the other to pyrimidine nucleotides. The large subunit (synthetase) binds the substrates ammonia (free or transferred from glutamine from the small subunit), hydrogencarbonate and ATP and carries out an ATP-coupled ligase reaction, activating hydrogencarbonate by forming carboxy phosphate which reacts with ammonia to form carbamoyl phosphate. The protein is Carbamoyl phosphate synthase large chain of Methanosarcina mazei (strain ATCC BAA-159 / DSM 3647 / Goe1 / Go1 / JCM 11833 / OCM 88) (Methanosarcina frisia).